Reading from the N-terminus, the 337-residue chain is Protein hairy (337 aa).

Positions lysine 29–asparagine 48 are interaction with Topors. Residues aspartate 31 to leucine 88 form the bHLH domain. Positions phenylalanine 107–leucine 136 constitute an Orange domain. Disordered stretches follow at residues glutamate 146–glycine 178 and methionine 259–arginine 311. Over residues threonine 263–proline 301 the composition is skewed to low complexity. A WRPW motif motif is present at residues tryptophan 334–tryptophan 337.

As to quaternary structure, transcription repression requires formation of a complex with a corepressor protein (Groucho). Interacts with gro (via WPRW motif) and Topors. Ubiquitinated by Topors.

The protein localises to the nucleus. Pair-rule protein that regulates embryonic segmentation and adult bristle patterning. Transcriptional repressor of genes that require a bHLH protein for their transcription (e.g. ftz). The chain is Protein hairy from Drosophila melanogaster (Fruit fly).